A 327-amino-acid chain; its full sequence is UPF0065 protein in gbd 5'region (327 aa).

Residues 1–30 constitute a signal peptide (tat-type signal); the sequence is MQRRHFIARAGIAAATAALGLAAMPAQAQA.

It belongs to the UPF0065 (bug) family. Predicted to be exported by the Tat system. The position of the signal peptide cleavage has not been experimentally proven.

Its subcellular location is the periplasm. In Cupriavidus necator (Alcaligenes eutrophus), this protein is UPF0065 protein in gbd 5'region.